Here is a 201-residue protein sequence, read N- to C-terminus: Pyridoxine/pyridoxamine 5'-phosphate oxidase (201 aa).

Residues 49 to 54 (RMVLLK), 64 to 65 (YT), lysine 71, and glutamine 93 each bind FMN. Lysine 54 lines the substrate pocket. The substrate site is built by tyrosine 111, arginine 115, and serine 119. Residues 128 to 129 (QS) and tryptophan 172 contribute to the FMN site. 178–180 (RLH) provides a ligand contact to substrate. Arginine 182 contributes to the FMN binding site.

Belongs to the pyridoxamine 5'-phosphate oxidase family. As to quaternary structure, homodimer. Requires FMN as cofactor.

It carries out the reaction pyridoxamine 5'-phosphate + O2 + H2O = pyridoxal 5'-phosphate + H2O2 + NH4(+). The catalysed reaction is pyridoxine 5'-phosphate + O2 = pyridoxal 5'-phosphate + H2O2. It functions in the pathway cofactor metabolism; pyridoxal 5'-phosphate salvage; pyridoxal 5'-phosphate from pyridoxamine 5'-phosphate: step 1/1. Its pathway is cofactor metabolism; pyridoxal 5'-phosphate salvage; pyridoxal 5'-phosphate from pyridoxine 5'-phosphate: step 1/1. Functionally, catalyzes the oxidation of either pyridoxine 5'-phosphate (PNP) or pyridoxamine 5'-phosphate (PMP) into pyridoxal 5'-phosphate (PLP). The protein is Pyridoxine/pyridoxamine 5'-phosphate oxidase of Ruegeria sp. (strain TM1040) (Silicibacter sp.).